The chain runs to 247 residues: Ferredoxin:CoB-CoM heterodisulfide reductase subunit C (247 aa).

In terms of domain architecture, 4Fe-4S ferredoxin-type spans 32-62 (TPESLGLDRCIQCGACTASCPAARFTDYSPR). The [4Fe-4S] cluster site is built by cysteine 41, cysteine 44, cysteine 47, cysteine 51, cysteine 84, cysteine 87, cysteine 90, and cysteine 94. Residues 216-240 (RTGTSCTEKKKNSGDLGFESDREYT) show a composition bias toward basic and acidic residues. The tract at residues 216–247 (RTGTSCTEKKKNSGDLGFESDREYTGQEALTV) is disordered.

It belongs to the HdrC family. The ferredoxin:CoB-CoM heterodisulfide reductase is composed of three subunits; HdrA1, HdrB1 and HdrC1. [4Fe-4S] cluster is required as a cofactor.

It localises to the cytoplasm. The enzyme catalyses coenzyme B + coenzyme M + 2 oxidized [2Fe-2S]-[ferredoxin] = coenzyme M-coenzyme B heterodisulfide + 2 reduced [2Fe-2S]-[ferredoxin] + 2 H(+). It participates in cofactor metabolism; coenzyme M-coenzyme B heterodisulfide reduction; coenzyme B and coenzyme M from coenzyme M-coenzyme B heterodisulfide: step 1/1. Functionally, part of a complex that catalyzes the reversible reduction of CoM-S-S-CoB to the thiol-coenzymes H-S-CoM (coenzyme M) and H-S-CoB (coenzyme B). Probably involved in methylotrophic methanogenesis but not in aceticlastic methanogenesis. The sequence is that of Ferredoxin:CoB-CoM heterodisulfide reductase subunit C from Methanosarcina acetivorans (strain ATCC 35395 / DSM 2834 / JCM 12185 / C2A).